Consider the following 148-residue polypeptide: Aspartate carbamoyltransferase regulatory chain (148 aa).

Residues Cys-106, Cys-111, Cys-134, and Cys-137 each contribute to the Zn(2+) site.

The protein belongs to the PyrI family. Contains catalytic and regulatory chains. Requires Zn(2+) as cofactor.

Involved in allosteric regulation of aspartate carbamoyltransferase. The polypeptide is Aspartate carbamoyltransferase regulatory chain (Methanococcus maripaludis (strain DSM 14266 / JCM 13030 / NBRC 101832 / S2 / LL)).